Reading from the N-terminus, the 283-residue chain is Foldase protein PrsA 3 (283 aa).

Positions Met-1–Ala-21 are cleaved as a signal peptide. Cys-22 carries N-palmitoyl cysteine lipidation. The S-diacylglycerol cysteine moiety is linked to residue Cys-22. In terms of domain architecture, PpiC spans Lys-132–Asp-222.

This sequence belongs to the PrsA family.

It is found in the cell membrane. The catalysed reaction is [protein]-peptidylproline (omega=180) = [protein]-peptidylproline (omega=0). Plays a major role in protein secretion by helping the post-translocational extracellular folding of several secreted proteins. Important for the secretion of the protective antigen. The three PsrA proteins in this organism show different but overlapping substrate specificities. This Bacillus anthracis protein is Foldase protein PrsA 3 (prsA3).